Here is a 297-residue protein sequence, read N- to C-terminus: Pyrroline-5-carboxylate reductase 1 (297 aa).

The protein belongs to the pyrroline-5-carboxylate reductase family.

The protein localises to the cytoplasm. It catalyses the reaction L-proline + NADP(+) = (S)-1-pyrroline-5-carboxylate + NADPH + 2 H(+). The catalysed reaction is L-proline + NAD(+) = (S)-1-pyrroline-5-carboxylate + NADH + 2 H(+). It participates in amino-acid biosynthesis; L-proline biosynthesis; L-proline from L-glutamate 5-semialdehyde: step 1/1. Catalyzes the reduction of 1-pyrroline-5-carboxylate (PCA) to L-proline. This is Pyrroline-5-carboxylate reductase 1 (proH) from Bacillus subtilis (strain 168).